Reading from the N-terminus, the 73-residue chain is U-scoloptoxin(22)-Cw1a (73 aa).

A signal peptide spans 1–24; that stretch reads MRRFVFLAFVLVLFVIANLDSSSA.

Belongs to the scoloptoxin-22 family. Post-translationally, contains 1 disulfide bond. In terms of tissue distribution, expressed by the venom gland.

It localises to the secreted. The protein is U-scoloptoxin(22)-Cw1a of Cormocephalus westwoodi (Westwood's green centipede).